The primary structure comprises 343 residues: Uroporphyrinogen decarboxylase (343 aa).

Residues 23-27 (RQAGR), Asp-73, Tyr-149, Thr-204, and His-320 each bind substrate.

Belongs to the uroporphyrinogen decarboxylase family. As to quaternary structure, homodimer.

The protein resides in the cytoplasm. The catalysed reaction is uroporphyrinogen III + 4 H(+) = coproporphyrinogen III + 4 CO2. It participates in porphyrin-containing compound metabolism; protoporphyrin-IX biosynthesis; coproporphyrinogen-III from 5-aminolevulinate: step 4/4. Catalyzes the decarboxylation of four acetate groups of uroporphyrinogen-III to yield coproporphyrinogen-III. This chain is Uroporphyrinogen decarboxylase, found in Bradyrhizobium sp. (strain BTAi1 / ATCC BAA-1182).